The primary structure comprises 212 residues: ATP phosphoribosyltransferase (212 aa).

It belongs to the ATP phosphoribosyltransferase family. Short subfamily. In terms of assembly, heteromultimer composed of HisG and HisZ subunits.

Its subcellular location is the cytoplasm. It catalyses the reaction 1-(5-phospho-beta-D-ribosyl)-ATP + diphosphate = 5-phospho-alpha-D-ribose 1-diphosphate + ATP. It functions in the pathway amino-acid biosynthesis; L-histidine biosynthesis; L-histidine from 5-phospho-alpha-D-ribose 1-diphosphate: step 1/9. In terms of biological role, catalyzes the condensation of ATP and 5-phosphoribose 1-diphosphate to form N'-(5'-phosphoribosyl)-ATP (PR-ATP). Has a crucial role in the pathway because the rate of histidine biosynthesis seems to be controlled primarily by regulation of HisG enzymatic activity. The chain is ATP phosphoribosyltransferase from Prochlorococcus marinus (strain MIT 9301).